The following is a 496-amino-acid chain: L-arabinose isomerase (496 aa).

Mn(2+) contacts are provided by Glu-306, Glu-331, His-348, and His-447.

It belongs to the arabinose isomerase family. Requires Mn(2+) as cofactor.

The enzyme catalyses beta-L-arabinopyranose = L-ribulose. The protein operates within carbohydrate degradation; L-arabinose degradation via L-ribulose; D-xylulose 5-phosphate from L-arabinose (bacterial route): step 1/3. Its function is as follows. Catalyzes the conversion of L-arabinose to L-ribulose. This Geobacillus thermodenitrificans (strain NG80-2) protein is L-arabinose isomerase.